The sequence spans 220 residues: UPF0502 protein CV_4303 (220 aa).

It belongs to the UPF0502 family.

The protein is UPF0502 protein CV_4303 of Chromobacterium violaceum (strain ATCC 12472 / DSM 30191 / JCM 1249 / CCUG 213 / NBRC 12614 / NCIMB 9131 / NCTC 9757 / MK).